The sequence spans 229 residues: Putative N-acetylmannosamine-6-phosphate 2-epimerase 2 (229 aa).

Belongs to the NanE family.

The enzyme catalyses an N-acyl-D-glucosamine 6-phosphate = an N-acyl-D-mannosamine 6-phosphate. The protein operates within amino-sugar metabolism; N-acetylneuraminate degradation; D-fructose 6-phosphate from N-acetylneuraminate: step 3/5. Functionally, converts N-acetylmannosamine-6-phosphate (ManNAc-6-P) to N-acetylglucosamine-6-phosphate (GlcNAc-6-P). This Salmonella paratyphi A (strain ATCC 9150 / SARB42) protein is Putative N-acetylmannosamine-6-phosphate 2-epimerase 2.